Reading from the N-terminus, the 208-residue chain is Interleukin-6 (208 aa).

The first 29 residues, 1-29 (MNSRFTSAFTPFAVSLGLLLVMTSAFPTP), serve as a signal peptide directing secretion. Residue Asn-38 is glycosylated (N-linked (GlcNAc...) asparagine). Cys-72 and Cys-78 form a disulfide bridge. A Phosphoserine modification is found at Ser-81. Cys-101 and Cys-111 are disulfide-bonded.

Belongs to the IL-6 superfamily. Component of a hexamer of two molecules each of IL6, IL6R and IL6ST; first binds to IL6R to associate with the signaling subunit IL6ST. Interacts with IL6R (via the N-terminal ectodomain); this interaction may be affected by IL6R-binding with SORL1, hence decreasing IL6 cis signaling. Interacts with SORL1 (via the N-terminal ectodomain); this interaction leads to IL6 internalization and lysosomal degradation. May form a trimeric complex with the soluble SORL1 ectodomain and soluble IL6R receptor; this interaction might stabilize circulating IL6, hence promoting IL6 trans signaling.

The protein resides in the secreted. Cytokine with a wide variety of biological functions in immunity, tissue regeneration, and metabolism. Binds to IL6R, then the complex associates to the signaling subunit IL6ST/gp130 to trigger the intracellular IL6-signaling pathway. The interaction with the membrane-bound IL6R and IL6ST stimulates 'classic signaling', whereas the binding of IL6 and soluble IL6R to IL6ST stimulates 'trans-signaling'. Alternatively, 'cluster signaling' occurs when membrane-bound IL6:IL6R complexes on transmitter cells activate IL6ST receptors on neighboring receiver cells. Its function is as follows. IL6 is a potent inducer of the acute phase response. Rapid production of IL6 contributes to host defense during infection and tissue injury, but excessive IL6 synthesis is involved in disease pathology. In the innate immune response, is synthesized by myeloid cells, such as macrophages and dendritic cells, upon recognition of pathogens through toll-like receptors (TLRs) at the site of infection or tissue injury. In the adaptive immune response, is required for the differentiation of B cells into immunoglobulin-secreting cells. Plays a major role in the differentiation of CD4(+) T cell subsets. Essential factor for the development of T follicular helper (Tfh) cells that are required for the induction of germinal-center formation. Required to drive naive CD4(+) T cells to the Th17 lineage. Also required for proliferation of myeloma cells and the survival of plasmablast cells. Functionally, acts as an essential factor in bone homeostasis and on vessels directly or indirectly by induction of VEGF, resulting in increased angiogenesis activity and vascular permeability. Induces, through 'trans-signaling' and synergistically with IL1B and TNF, the production of VEGF. Involved in metabolic controls, is discharged into the bloodstream after muscle contraction increasing lipolysis and improving insulin resistance. 'Trans-signaling' in central nervous system also regulates energy and glucose homeostasis. Mediates, through GLP-1, crosstalk between insulin-sensitive tissues, intestinal L cells and pancreatic islets to adapt to changes in insulin demand. Also acts as a myokine. Plays a protective role during liver injury, being required for maintenance of tissue regeneration. Also has a pivotal role in iron metabolism by regulating HAMP/hepcidin expression upon inflammation or bacterial infection. Through activation of IL6ST-YAP-NOTCH pathway, induces inflammation-induced epithelial regeneration. The polypeptide is Interleukin-6 (IL6) (Bos taurus (Bovine)).